The following is a 273-amino-acid chain: Aliphatic sulfonates import ATP-binding protein SsuB 2 (273 aa).

One can recognise an ABC transporter domain in the interval 17-241 (LLDLRITRKL…PRDRRDPTLA (225 aa)). 50-57 (GPSGCGKS) contributes to the ATP binding site.

It belongs to the ABC transporter superfamily. Aliphatic sulfonates importer (TC 3.A.1.17.2) family. As to quaternary structure, the complex is composed of two ATP-binding proteins (SsuB), two transmembrane proteins (SsuC) and a solute-binding protein (SsuA).

The protein resides in the cell inner membrane. It catalyses the reaction ATP + H2O + aliphatic sulfonate-[sulfonate-binding protein]Side 1 = ADP + phosphate + aliphatic sulfonateSide 2 + [sulfonate-binding protein]Side 1.. Functionally, part of the ABC transporter complex SsuABC involved in aliphatic sulfonates import. Responsible for energy coupling to the transport system. The chain is Aliphatic sulfonates import ATP-binding protein SsuB 2 from Burkholderia lata (strain ATCC 17760 / DSM 23089 / LMG 22485 / NCIMB 9086 / R18194 / 383).